We begin with the raw amino-acid sequence, 87 residues long: Phosphoribosyl-ATP pyrophosphatase (87 aa).

The protein belongs to the PRA-PH family.

It is found in the cytoplasm. The enzyme catalyses 1-(5-phospho-beta-D-ribosyl)-ATP + H2O = 1-(5-phospho-beta-D-ribosyl)-5'-AMP + diphosphate + H(+). It participates in amino-acid biosynthesis; L-histidine biosynthesis; L-histidine from 5-phospho-alpha-D-ribose 1-diphosphate: step 2/9. This Nocardia farcinica (strain IFM 10152) protein is Phosphoribosyl-ATP pyrophosphatase.